The following is a 959-amino-acid chain: MSDKTNDDKTLSVNPKKTLTLKRPGVEQSTVRQNFSHGRTKAVVVETKKRKFSRPDEKPEVEAAAAPKPAAPAAAPQQAPASAPVSASAAQASAPQPAPVKAPATKAPAAPSAPVTKPHVAQQRPVHQRPGGQQAQRPRPADRSGMVLNTLSRSEMDARRRALEEAQIREVEERARAVEEAKRRAEEDARRAKEREESARRQAEEEARLKAEAEARRKAEEEAAKRMPQPEARSERRDDARPAPYGARPQQAGRPQGGRPQPAGRPQQGSPRPAPIIADAAPIAGKPLPQSQLRKPGQSDDDDDRRSGAARRGVAAKPEVRAPKVVKGEDDRRRGKLTLTSNLEEEGRSRSLSAMRRRQEKFKRSQMQETREKISREVTIPETITLQELAQRMAERSVDIIKYLMKQGQMMKPGDVIDADTAQLIAEEFGHTVKRVAESDVEEGIFDVADNESAMVSRPPVVTIMGHVDHGKTSLLDAIRHANVVSGEAGGITQHIGAYQVVQNGQKITFIDTPGHAAFTAMRARGAQATDIAILVVAADDSVMPQTIESINHAKAAGVPIIVAINKIDKPAADPQKVRTALLQHEVFVESMGGEVLDVEVSAKNKINLDKLLDAVLLQAEMLDLKADPDRTAEGVVIEAQLDRGRGSVATVLIQKGTLHPGDILVAGSEWGRVRALVNDRGEHVKEAGPAMPVEILGLQGTPQAGDRFAVVANEAKAREIAEYRQRLARDKAVARQSGARGSLEQMMNQLQVSGTKEFPLVIKGDVQGSIEAITNALDKLGTDEVRARIVHSGAGGITESDVSLAEASNAAIIGFNVRANKQARDSAEQQGIEIRYYNIIYDLIDDVKAAMSGLLSPERRETFLGNAEILEVFNITKVGKVAGCRVTEGKVERGAGVRLIRDNVVIHEGKLKTLKRFKDEVAEVPSGQECGMAFENYDDIRAGDVIEAFRVEHVSRTL.

Basic and acidic residues predominate over residues 1 to 10; sequence MSDKTNDDKT. The interval 1-374 is disordered; it reads MSDKTNDDKT…SQMQETREKI (374 aa). Positions 27–37 are enriched in polar residues; it reads EQSTVRQNFSH. Composition is skewed to low complexity over residues 63–118 and 128–138; these read AAAA…VTKP and QRPGGQQAQRP. 2 stretches are compositionally biased toward basic and acidic residues: residues 154–225 and 232–241; these read SEMD…EAAK and ARSERRDDAR. The span at 246 to 284 shows a compositional bias: low complexity; that stretch reads GARPQQAGRPQGGRPQPAGRPQQGSPRPAPIIADAAPIA. The span at 318–333 shows a compositional bias: basic and acidic residues; the sequence is PEVRAPKVVKGEDDRR. The region spanning 457-626 is the tr-type G domain; that stretch reads SRPPVVTIMG…LLQAEMLDLK (170 aa). The G1 stretch occupies residues 466–473; sequence GHVDHGKT. Residue 466–473 participates in GTP binding; the sequence is GHVDHGKT. The tract at residues 491–495 is G2; that stretch reads GITQH. Positions 512 to 515 are G3; sequence DTPG. GTP contacts are provided by residues 512 to 516 and 566 to 569; these read DTPGH and NKID. The interval 566–569 is G4; the sequence is NKID. Residues 602-604 form a G5 region; the sequence is SAK.

The protein belongs to the TRAFAC class translation factor GTPase superfamily. Classic translation factor GTPase family. IF-2 subfamily.

The protein localises to the cytoplasm. In terms of biological role, one of the essential components for the initiation of protein synthesis. Protects formylmethionyl-tRNA from spontaneous hydrolysis and promotes its binding to the 30S ribosomal subunits. Also involved in the hydrolysis of GTP during the formation of the 70S ribosomal complex. The chain is Translation initiation factor IF-2 from Brucella abortus (strain 2308).